Here is a 310-residue protein sequence, read N- to C-terminus: HTH-type transcriptional regulator CbbR (310 aa).

The 58-residue stretch at 7–64 (ITLKQLRALVAVAGSASLTGGATRLGLTPPAIHSQIRNLEEAFGVPLLHRPPETGSFT) folds into the HTH lysR-type domain. The H-T-H motif DNA-binding region spans 24 to 43 (LTGGATRLGLTPPAIHSQIR).

The protein belongs to the LysR transcriptional regulatory family.

Transcriptional activator for the cbb operon for RuBisCO and other Calvin cycle genes. The polypeptide is HTH-type transcriptional regulator CbbR (cbbR) (Cereibacter sphaeroides (Rhodobacter sphaeroides)).